Here is a 291-residue protein sequence, read N- to C-terminus: Arabinogalactan O-methyltransferase 2 (291 aa).

The helical transmembrane segment at 18–38 threads the bilayer; that stretch reads WFLAVALAGLIGGAMLITSFI.

The protein belongs to the methyltransferase superfamily.

It is found in the golgi apparatus membrane. Functionally, involved in the methylation of glucuronic acid of different plant cell wall component, but mainly on side chains of arabinogalactans. This is Arabinogalactan O-methyltransferase 2 from Arabidopsis thaliana (Mouse-ear cress).